Reading from the N-terminus, the 331-residue chain is Tetraacyldisaccharide 4'-kinase (331 aa).

An ATP-binding site is contributed by 51–58 (TAGGAGKT).

It belongs to the LpxK family.

It catalyses the reaction a lipid A disaccharide + ATP = a lipid IVA + ADP + H(+). It participates in glycolipid biosynthesis; lipid IV(A) biosynthesis; lipid IV(A) from (3R)-3-hydroxytetradecanoyl-[acyl-carrier-protein] and UDP-N-acetyl-alpha-D-glucosamine: step 6/6. Its function is as follows. Transfers the gamma-phosphate of ATP to the 4'-position of a tetraacyldisaccharide 1-phosphate intermediate (termed DS-1-P) to form tetraacyldisaccharide 1,4'-bis-phosphate (lipid IVA). This chain is Tetraacyldisaccharide 4'-kinase, found in Rhodospirillum rubrum (strain ATCC 11170 / ATH 1.1.1 / DSM 467 / LMG 4362 / NCIMB 8255 / S1).